The sequence spans 183 residues: Inner membrane-spanning protein YciB (183 aa).

The next 5 helical transmembrane spans lie at 10 to 30 (LVIFFAVYKLFDIYAASGALI), 50 to 70 (MHLITFVMVTVFGTLTLVFHD), 72 to 92 (AFIKWKVTVVYALFAIALAVS), 118 to 138 (VTWYWVSFFITCALVNIYVAF), and 148 to 168 (FKVFGLTALTLVNTVITVIYL).

It belongs to the YciB family.

The protein localises to the cell inner membrane. In terms of biological role, plays a role in cell envelope biogenesis, maintenance of cell envelope integrity and membrane homeostasis. The sequence is that of Inner membrane-spanning protein YciB from Shewanella sediminis (strain HAW-EB3).